Consider the following 221-residue polypeptide: Putative N-acetylmannosamine-6-phosphate 2-epimerase (221 aa).

Belongs to the NanE family.

It carries out the reaction an N-acyl-D-glucosamine 6-phosphate = an N-acyl-D-mannosamine 6-phosphate. It participates in amino-sugar metabolism; N-acetylneuraminate degradation; D-fructose 6-phosphate from N-acetylneuraminate: step 3/5. In terms of biological role, converts N-acetylmannosamine-6-phosphate (ManNAc-6-P) to N-acetylglucosamine-6-phosphate (GlcNAc-6-P). The sequence is that of Putative N-acetylmannosamine-6-phosphate 2-epimerase from Clostridium perfringens (strain ATCC 13124 / DSM 756 / JCM 1290 / NCIMB 6125 / NCTC 8237 / Type A).